Here is a 445-residue protein sequence, read N- to C-terminus: Probable fructoselysine/psicoselysine transporter FrlA (445 aa).

Helical transmembrane passes span 10 to 32 (LGFW…FVSV), 39 to 61 (AGTP…PQMC), 97 to 119 (FWAN…LGFL), 126 to 143 (LGKF…LLHL), 153 to 175 (QTLI…IFWF), 188 to 210 (IGAT…SYTG), 230 to 252 (RALI…VISG), 272 to 294 (WIPA…VILG), 341 to 363 (GIFF…VMCF), 384 to 406 (LWRT…ILVA), and 411 to 433 (WAPI…AYAF).

Belongs to the amino acid-polyamine-organocation (APC) superfamily.

The protein localises to the cell inner membrane. The catalysed reaction is N(6)-(D-fructosyl)-L-lysine(in) = N(6)-(D-fructosyl)-L-lysine(out). The enzyme catalyses N(6)-(D-psicosyl)-L-lysine(in) = N(6)-(D-psicosyl)-L-lysine(out). Its pathway is carbohydrate metabolism; fructoselysine degradation. In terms of biological role, is likely involved in the transport of fructoselysine and psicoselysine to the cytoplasm, where they are degraded. This chain is Probable fructoselysine/psicoselysine transporter FrlA (frlA), found in Escherichia coli O157:H7.